The following is a 599-amino-acid chain: Cytosolic Fe-S cluster assembly factor nar1 (599 aa).

[4Fe-4S] cluster contacts are provided by Cys-20, Cys-62, Cys-65, Cys-68, Cys-210, Cys-265, Cys-468, and Cys-472.

The protein belongs to the NARF family.

Functionally, component of the cytosolic Fe/S protein assembly machinery. Required for maturation of extramitochondrial Fe/S proteins. May play a role in the transfer of pre-assembled Fe/S clusters to target apoproteins. This is Cytosolic Fe-S cluster assembly factor nar1 (nar1) from Aspergillus terreus (strain NIH 2624 / FGSC A1156).